A 93-amino-acid polypeptide reads, in one-letter code: Large ribosomal subunit protein uL23 (93 aa).

The protein belongs to the universal ribosomal protein uL23 family. As to quaternary structure, part of the 50S ribosomal subunit. Contacts protein L29, and trigger factor when it is bound to the ribosome.

In terms of biological role, one of the early assembly proteins it binds 23S rRNA. One of the proteins that surrounds the polypeptide exit tunnel on the outside of the ribosome. Forms the main docking site for trigger factor binding to the ribosome. This Nautilia profundicola (strain ATCC BAA-1463 / DSM 18972 / AmH) protein is Large ribosomal subunit protein uL23.